We begin with the raw amino-acid sequence, 131 residues long: Insulin-like 3 (131 aa).

A signal peptide spans 1-26 (MDPHPLTWALVLLGPALALSRAPAPA). 3 disulfides stabilise this stretch: Cys34–Cys116, Cys46–Cys129, and Cys115–Cys120. Positions 58-103 (AVAGGDRELLQWLEGQHLFHGLMASGDPMLVLAPQPPPQASGHHHH) are cleaved as a propeptide — c peptide like.

The protein belongs to the insulin family. As to quaternary structure, heterodimer of a B chain and an A chain linked by two disulfide bonds. In terms of tissue distribution, expressed exclusively in prenatal and postnatal Leydig cells.

Its subcellular location is the secreted. Seems to play a role in testicular function. May be a trophic hormone with a role in testicular descent in fetal life. Is a ligand for LGR8 receptor. The protein is Insulin-like 3 (INSL3) of Sus scrofa (Pig).